Here is a 455-residue protein sequence, read N- to C-terminus: tRNA modification GTPase MnmE (455 aa).

Residues Arg-24, Glu-81, and Lys-121 each coordinate (6S)-5-formyl-5,6,7,8-tetrahydrofolate. Residues 217 to 378 (GMKVVIAGRP…LREHLKDCMG (162 aa)) enclose the TrmE-type G domain. Position 227 (Asn-227) interacts with K(+). GTP contacts are provided by residues 227-232 (NAGKSS), 246-252 (TDIAGTT), 271-274 (DTAG), and 359-361 (SAR). A Mg(2+)-binding site is contributed by Ser-231. Thr-246, Ile-248, and Thr-251 together coordinate K(+). Mg(2+) is bound at residue Thr-252. (6S)-5-formyl-5,6,7,8-tetrahydrofolate is bound at residue Lys-455.

This sequence belongs to the TRAFAC class TrmE-Era-EngA-EngB-Septin-like GTPase superfamily. TrmE GTPase family. Homodimer. Heterotetramer of two MnmE and two MnmG subunits. K(+) serves as cofactor.

The protein localises to the cytoplasm. Exhibits a very high intrinsic GTPase hydrolysis rate. Involved in the addition of a carboxymethylaminomethyl (cmnm) group at the wobble position (U34) of certain tRNAs, forming tRNA-cmnm(5)s(2)U34. In Photobacterium profundum (strain SS9), this protein is tRNA modification GTPase MnmE.